Consider the following 258-residue polypeptide: 3-deoxy-manno-octulosonate cytidylyltransferase (258 aa).

The protein belongs to the KdsB family.

Its subcellular location is the cytoplasm. It catalyses the reaction 3-deoxy-alpha-D-manno-oct-2-ulosonate + CTP = CMP-3-deoxy-beta-D-manno-octulosonate + diphosphate. It functions in the pathway nucleotide-sugar biosynthesis; CMP-3-deoxy-D-manno-octulosonate biosynthesis; CMP-3-deoxy-D-manno-octulosonate from 3-deoxy-D-manno-octulosonate and CTP: step 1/1. It participates in bacterial outer membrane biogenesis; lipopolysaccharide biosynthesis. In terms of biological role, activates KDO (a required 8-carbon sugar) for incorporation into bacterial lipopolysaccharide in Gram-negative bacteria. This Gemmatimonas aurantiaca (strain DSM 14586 / JCM 11422 / NBRC 100505 / T-27) protein is 3-deoxy-manno-octulosonate cytidylyltransferase.